We begin with the raw amino-acid sequence, 276 residues long: Bis(5'-nucleosyl)-tetraphosphatase, symmetrical (276 aa).

The protein belongs to the Ap4A hydrolase family.

It catalyses the reaction P(1),P(4)-bis(5'-adenosyl) tetraphosphate + H2O = 2 ADP + 2 H(+). Hydrolyzes diadenosine 5',5'''-P1,P4-tetraphosphate to yield ADP. The protein is Bis(5'-nucleosyl)-tetraphosphatase, symmetrical of Mannheimia succiniciproducens (strain KCTC 0769BP / MBEL55E).